Here is a 65-residue protein sequence, read N- to C-terminus: RKCLIKYSQANESSKTCPSGQLLCLKKWEIGNPSGKEVKRGCVATCPKPWKNEIIQCCAKDKCNA.

4 disulfides stabilise this stretch: C3/C24, C17/C42, C46/C57, and C58/C63.

This sequence belongs to the three-finger toxin family. Short-chain subfamily. Orphan group III sub-subfamily. Expressed by the venom gland.

The protein resides in the secreted. The chain is Bucain from Bungarus candidus (Malayan krait).